Here is a 177-residue protein sequence, read N- to C-terminus: Large ribosomal subunit protein uL10 (177 aa).

This sequence belongs to the universal ribosomal protein uL10 family. As to quaternary structure, part of the ribosomal stalk of the 50S ribosomal subunit. The N-terminus interacts with L11 and the large rRNA to form the base of the stalk. The C-terminus forms an elongated spine to which L12 dimers bind in a sequential fashion forming a multimeric L10(L12)X complex.

Forms part of the ribosomal stalk, playing a central role in the interaction of the ribosome with GTP-bound translation factors. The protein is Large ribosomal subunit protein uL10 of Thermoanaerobacter sp. (strain X514).